The following is a 140-amino-acid chain: Cysteine desulfuration protein SufE (140 aa).

Cysteine 51 functions as the Cysteine persulfide intermediate in the catalytic mechanism.

Belongs to the SufE family. In terms of assembly, homodimer. Interacts with SufS.

It localises to the cytoplasm. The protein operates within cofactor biosynthesis; iron-sulfur cluster biosynthesis. In terms of biological role, participates in cysteine desulfuration mediated by SufS. Cysteine desulfuration mobilizes sulfur from L-cysteine to yield L-alanine and constitutes an essential step in sulfur metabolism for biosynthesis of a variety of sulfur-containing biomolecules. Functions as a sulfur acceptor for SufS, by mediating the direct transfer of the sulfur atom from the S-sulfanylcysteine of SufS, an intermediate product of cysteine desulfuration process. In Yersinia pseudotuberculosis serotype O:1b (strain IP 31758), this protein is Cysteine desulfuration protein SufE.